A 425-amino-acid polypeptide reads, in one-letter code: Histidine--tRNA ligase (425 aa).

Belongs to the class-II aminoacyl-tRNA synthetase family. As to quaternary structure, homodimer.

The protein resides in the cytoplasm. The catalysed reaction is tRNA(His) + L-histidine + ATP = L-histidyl-tRNA(His) + AMP + diphosphate + H(+). This is Histidine--tRNA ligase from Chlorobium chlorochromatii (strain CaD3).